A 323-amino-acid chain; its full sequence is o-succinylbenzoate synthase (323 aa).

Lys-134 serves as the catalytic Proton donor. Residues Asp-162, Glu-191, and Asp-214 each coordinate Mg(2+). The active-site Proton acceptor is the Lys-236.

Belongs to the mandelate racemase/muconate lactonizing enzyme family. MenC type 1 subfamily. The cofactor is a divalent metal cation.

It carries out the reaction (1R,6R)-6-hydroxy-2-succinyl-cyclohexa-2,4-diene-1-carboxylate = 2-succinylbenzoate + H2O. It participates in quinol/quinone metabolism; 1,4-dihydroxy-2-naphthoate biosynthesis; 1,4-dihydroxy-2-naphthoate from chorismate: step 4/7. It functions in the pathway quinol/quinone metabolism; menaquinone biosynthesis. In terms of biological role, converts 2-succinyl-6-hydroxy-2,4-cyclohexadiene-1-carboxylate (SHCHC) to 2-succinylbenzoate (OSB). This chain is o-succinylbenzoate synthase, found in Edwardsiella ictaluri (strain 93-146).